The following is a 259-amino-acid chain: Bacillaene synthase dehydratase PksH (259 aa).

Active-site residues include Asp68 and Glu137.

The protein belongs to the enoyl-CoA hydratase/isomerase family.

It is found in the cytoplasm. It functions in the pathway antibiotic biosynthesis; bacillaene biosynthesis. Its function is as follows. Involved in some intermediate steps for the synthesis of the antibiotic polyketide bacillaene which is involved in secondary metabolism. Catalyzes the dehydration of the (S)-3-hydroxy-3-methylglutaryl group tethered to PksL to a 3-methylglutaconyl moiety. The protein is Bacillaene synthase dehydratase PksH (pksH) of Bacillus subtilis (strain 168).